The primary structure comprises 376 residues: 23S rRNA (uracil(747)-C(5))-methyltransferase RlmC (376 aa).

[4Fe-4S] cluster contacts are provided by cysteine 3, cysteine 11, cysteine 14, and cysteine 87. S-adenosyl-L-methionine-binding residues include glutamine 212, phenylalanine 241, glutamate 262, and asparagine 307. The active-site Nucleophile is the cysteine 334.

This sequence belongs to the class I-like SAM-binding methyltransferase superfamily. RNA M5U methyltransferase family. RlmC subfamily.

It carries out the reaction uridine(747) in 23S rRNA + S-adenosyl-L-methionine = 5-methyluridine(747) in 23S rRNA + S-adenosyl-L-homocysteine + H(+). In terms of biological role, catalyzes the formation of 5-methyl-uridine at position 747 (m5U747) in 23S rRNA. This is 23S rRNA (uracil(747)-C(5))-methyltransferase RlmC from Yersinia pseudotuberculosis serotype I (strain IP32953).